The primary structure comprises 254 residues: 5-oxoprolinase subunit A (254 aa).

Belongs to the LamB/PxpA family. In terms of assembly, forms a complex composed of PxpA, PxpB and PxpC.

It catalyses the reaction 5-oxo-L-proline + ATP + 2 H2O = L-glutamate + ADP + phosphate + H(+). In terms of biological role, catalyzes the cleavage of 5-oxoproline to form L-glutamate coupled to the hydrolysis of ATP to ADP and inorganic phosphate. In Burkholderia lata (strain ATCC 17760 / DSM 23089 / LMG 22485 / NCIMB 9086 / R18194 / 383), this protein is 5-oxoprolinase subunit A.